The primary structure comprises 792 residues: Lon protease (792 aa).

One can recognise a Lon N-terminal domain in the interval 16 to 208; it reads LPILPLRETV…KVTYYLTREL (193 aa). Residue 360–367 participates in ATP binding; the sequence is GPPGVGKT. One can recognise a Lon proteolytic domain in the interval 597-778; the sequence is KDEVGVATGL…DEVLNLALLE (182 aa). Residues Ser684 and Lys727 contribute to the active site.

The protein belongs to the peptidase S16 family. As to quaternary structure, homohexamer. Organized in a ring with a central cavity.

The protein localises to the cytoplasm. The enzyme catalyses Hydrolysis of proteins in presence of ATP.. Its function is as follows. ATP-dependent serine protease that mediates the selective degradation of mutant and abnormal proteins as well as certain short-lived regulatory proteins. Required for cellular homeostasis and for survival from DNA damage and developmental changes induced by stress. Degrades polypeptides processively to yield small peptide fragments that are 5 to 10 amino acids long. Binds to DNA in a double-stranded, site-specific manner. The chain is Lon protease from Dictyoglomus thermophilum (strain ATCC 35947 / DSM 3960 / H-6-12).